Consider the following 517-residue polypeptide: Gallate 1-beta-glucosyltransferase 84A24 (517 aa).

H19 serves as the catalytic Proton acceptor. H19 lines the an anthocyanidin pocket. The UDP-alpha-D-glucose site is built by Q344, H359, W362, N363, S364, and E367. G382 is an an anthocyanidin binding site. Residues D383 and Q384 each contribute to the UDP-alpha-D-glucose site.

This sequence belongs to the UDP-glycosyltransferase family. Highly expressed in leaf. Also expressed in peel, stem, root and aril.

The protein resides in the cytoplasm. The catalysed reaction is 3,4,5-trihydroxybenzoate + UDP-alpha-D-glucose = 1-O-galloyl-beta-D-glucose + UDP. It catalyses the reaction 3,4-dihydroxybenzoate + UDP-alpha-D-glucose = 1-O-(3,4-dihydroxy-benzoyl)-beta-D-glucose + UDP. It carries out the reaction 4-hydroxybenzoate + UDP-alpha-D-glucose = 4-(beta-D-glucosyloxy)benzoate + UDP + H(+). The enzyme catalyses (E)-cinnamate + UDP-alpha-D-glucose = 1-O-(trans-cinnamoyl)-beta-D-glucose + UDP. The catalysed reaction is (E)-sinapate + UDP-alpha-D-glucose = 1-O-(trans-sinapoyl)-beta-D-glucose + UDP. It catalyses the reaction (E)-4-coumarate + UDP-alpha-D-glucose = 1-O-(trans-4-coumaroyl)-beta-D-glucose + UDP. It carries out the reaction (E)-caffeate + UDP-alpha-D-glucose = 1-O-[(E)-caffeoyl]-beta-D-glucose + UDP. The enzyme catalyses (E)-ferulate + UDP-alpha-D-glucose = 1-O-[(E)-feruloyl]-beta-D-glucose + UDP. The catalysed reaction is genistein + UDP-alpha-D-glucose = genistein 7-O-beta-D-glucoside + UDP + H(+). It catalyses the reaction apigenin + UDP-alpha-D-glucose = apigenin 7-O-beta-D-glucoside + UDP + H(+). It carries out the reaction luteolin + UDP-alpha-D-glucose = luteolin 7-O-beta-D-glucoside + UDP + H(+). Functionally, glucosyltransferase that catalyzes the formation of 1-O-beta-D-glucose esters with hydroxybenzoic acids and cinnamic acid including its derivatives as preferred glucosyl acceptors. Has significant activity with gallic acid (3,4,5-trihydroxybenzoic acid), 3,4-dihydroxybenzoic acid, 4-hydroxybenzoic acid, cinnamic acid, sinapic acid, coumaric acid, caffeic acid and ferulic acid in vitro. Gallic acid is the predicted native substrate of the enzyme, which thus catalyzes the formation of 1-O-galloyl-beta-D-glucose, the first committed step of hydrolyzable tannins (HTs) biosynthesis, with punicalagin isomers being the major HTs of pomegranate. Catalyzes the formation of flavonoid glucosides with genistein, apigenin and luteolin in vitro. Has low activity with benzoic acid, 2-hydroxybenzoic acid, 3-hydroxybenzoic acid, 2,4-dihydroxybenzoic acid, naringenin and quercetin. No activity with catechol, resveratrol, chlorogenic acid, catechin and epicatechin (building blocks of proanthocyanidins) or cyanidin, delphinidin and pelargonidin (the three anthocyanidins). In Punica granatum (Pomegranate), this protein is Gallate 1-beta-glucosyltransferase 84A24.